Consider the following 491-residue polypeptide: Glucose-6-phosphate 1-dehydrogenase (491 aa).

Residues Arg49, 91 to 92, and Lys146 contribute to the NADP(+) site; that span reads DV. The substrate site is built by His176, Lys180, Glu214, and Asp233. The active-site Proton acceptor is His238. Positions 338 and 343 each coordinate substrate.

Belongs to the glucose-6-phosphate dehydrogenase family.

It carries out the reaction D-glucose 6-phosphate + NADP(+) = 6-phospho-D-glucono-1,5-lactone + NADPH + H(+). It functions in the pathway carbohydrate degradation; pentose phosphate pathway; D-ribulose 5-phosphate from D-glucose 6-phosphate (oxidative stage): step 1/3. Catalyzes the oxidation of glucose 6-phosphate to 6-phosphogluconolactone. This Buchnera aphidicola subsp. Acyrthosiphon pisum (strain APS) (Acyrthosiphon pisum symbiotic bacterium) protein is Glucose-6-phosphate 1-dehydrogenase.